Consider the following 237-residue polypeptide: Uridylate kinase (237 aa).

Residue 11-14 (KLSG) coordinates ATP. G53 contributes to the UMP binding site. ATP contacts are provided by G54 and R58. UMP is bound by residues D73 and 134–141 (TGNPFFTT). ATP is bound by residues T161, Y167, and D170.

This sequence belongs to the UMP kinase family. Homohexamer.

It is found in the cytoplasm. The catalysed reaction is UMP + ATP = UDP + ADP. The protein operates within pyrimidine metabolism; CTP biosynthesis via de novo pathway; UDP from UMP (UMPK route): step 1/1. Its activity is regulated as follows. Inhibited by UTP. Functionally, catalyzes the reversible phosphorylation of UMP to UDP. This is Uridylate kinase from Nitrosomonas europaea (strain ATCC 19718 / CIP 103999 / KCTC 2705 / NBRC 14298).